Reading from the N-terminus, the 231-residue chain is Large ribosomal subunit protein uL1 (231 aa).

The protein belongs to the universal ribosomal protein uL1 family. In terms of assembly, part of the 50S ribosomal subunit.

Its function is as follows. Binds directly to 23S rRNA. The L1 stalk is quite mobile in the ribosome, and is involved in E site tRNA release. Protein L1 is also a translational repressor protein, it controls the translation of the L11 operon by binding to its mRNA. The chain is Large ribosomal subunit protein uL1 from Methylocella silvestris (strain DSM 15510 / CIP 108128 / LMG 27833 / NCIMB 13906 / BL2).